The sequence spans 764 residues: Molybdenum cofactor sulfurase 3 (764 aa).

An N6-(pyridoxal phosphate)lysine modification is found at K228. C394 is an active-site residue. The MOSC domain occupies 607 to 762 (LRLLKQSDEE…LYCNSVVEGL (156 aa)).

Belongs to the class-V pyridoxal-phosphate-dependent aminotransferase family. MOCOS subfamily. Pyridoxal 5'-phosphate is required as a cofactor.

It carries out the reaction Mo-molybdopterin + L-cysteine + AH2 = thio-Mo-molybdopterin + L-alanine + A + H2O. Functionally, sulfurates the molybdenum cofactor. Sulfation of molybdenum is essential for xanthine dehydrogenase (XDH) and aldehyde oxidase (ADO) enzymes in which molybdenum cofactor is liganded by 1 oxygen and 1 sulfur atom in active form. This Aedes aegypti (Yellowfever mosquito) protein is Molybdenum cofactor sulfurase 3.